The chain runs to 57 residues: Large ribosomal subunit protein bL32 (57 aa).

Residues 1-19 (MAVPKRRMSRANTRSRRAQ) are compositionally biased toward basic residues. The tract at residues 1 to 20 (MAVPKRRMSRANTRSRRAQW) is disordered.

This sequence belongs to the bacterial ribosomal protein bL32 family.

This Mycobacterium avium (strain 104) protein is Large ribosomal subunit protein bL32.